Consider the following 37-residue polypeptide: Large ribosomal subunit protein bL36 (37 aa).

The protein belongs to the bacterial ribosomal protein bL36 family.

The sequence is that of Large ribosomal subunit protein bL36 from Salinispora arenicola (strain CNS-205).